Consider the following 1985-residue polypeptide: Non-reducing polyketide synthase ntnG (1985 aa).

Positions 7–243 (LLFGDQADAP…TILPAFGAVH (237 aa)) are N-terminal acylcarrier protein transacylase (SAT) domain. A Ketosynthase family 3 (KS3) domain is found at 364–792 (SGSVAIIGMS…GGNSCFVLEE (429 aa)). Active-site for beta-ketoacyl synthase activity residues include cysteine 536, histidine 671, and histidine 711. The malonyl-CoA:ACP transacylase (MAT) domain stretch occupies residues 889–1148 (VFAFTGQGAH…VNFEQAISHC (260 aa)). Serine 980 (for acyl/malonyl transferase activity) is an active-site residue. Positions 1261 to 1392 (HRLVKQEDTA…VRLRDEHAFD (132 aa)) are N-terminal hotdog fold. Residues 1261–1567 (HRLVKQEDTA…FRKMPRTTLH (307 aa)) enclose the PKS/mFAS DH domain. Residues 1265 to 1566 (KQEDTAKEQH…RFRKMPRTTL (302 aa)) are product template (PT) domain. Catalysis depends on histidine 1293, which acts as the Proton acceptor; for dehydratase activity. Residues 1414 to 1567 (AGGRANRFQG…FRKMPRTTLH (154 aa)) form a C-terminal hotdog fold region. The active-site Proton donor; for dehydratase activity is the aspartate 1479. Polar residues predominate over residues 1578–1605 (NTKQVPHPTTNGSAIANGVNRNPSHNEP). A disordered region spans residues 1578 to 1622 (NTKQVPHPTTNGSAIANGVNRNPSHNEPSTPPVANGVNGTNGDQS). One can recognise a Carrier domain in the interval 1622–1699 (SDRKSLYSVL…DAQRELRRLE (78 aa)). The residue at position 1659 (serine 1659) is an O-(pantetheine 4'-phosphoryl)serine. The segment at 1719 to 1913 (TRECNVVLMQ…DCTFVIWAKK (195 aa)) is thioesterase (TE) domain.

It functions in the pathway secondary metabolite biosynthesis; terpenoid biosynthesis. Non-reducing polyketide synthase; part of the gene cluster that mediates the biosynthesis of the meroterpenoids nectripenoids A and B, as well as cochliquninone D and isocochliquninone E. The pathway probably begins with the HR-PKS ntnH that catalyzes two chain-extension steps to form a reduced triketide, which then primes the SAT domain in the NR-PKS ntnG to initiate three more cycles of extension to give a linear hexaketide corresponding to the polyketide part of nectripenoids. The FAD-dependent monooxygenase ntnJ then performs an oxidative decarboxylation at C11 of the ntnH/ntnG product, via an electrophilic aromatic hydroxylation with concomitant ipso-decarboxylation. The membrane-bound polyprenyl transferase ntnF then introduces a farnesyl group before the FAD-dependent monooxygenase ntnK functions as the first epoxidase on terminal C12'-C13' olefin, followed by a second epoxidation on C7'-C8' catalyzed by ntnA. The terpene cyclase/mutase ntnI then initiates the sequential tricyclic ring formation through protonation of the terminal epoxide and catalyzes the regioselective and stereoselective 6/6/6-tricyclic ring formation. The cytochrome P450 monooxygenase ntnM may then hydroxylate C1'. In Nectria sp, this protein is Non-reducing polyketide synthase ntnG.